Reading from the N-terminus, the 513-residue chain is ATP synthase subunit alpha (513 aa).

169-176 (GDRQTGKT) is an ATP binding site.

It belongs to the ATPase alpha/beta chains family. As to quaternary structure, F-type ATPases have 2 components, CF(1) - the catalytic core - and CF(0) - the membrane proton channel. CF(1) has five subunits: alpha(3), beta(3), gamma(1), delta(1), epsilon(1). CF(0) has three main subunits: a(1), b(2) and c(9-12). The alpha and beta chains form an alternating ring which encloses part of the gamma chain. CF(1) is attached to CF(0) by a central stalk formed by the gamma and epsilon chains, while a peripheral stalk is formed by the delta and b chains.

It localises to the cell inner membrane. The catalysed reaction is ATP + H2O + 4 H(+)(in) = ADP + phosphate + 5 H(+)(out). Functionally, produces ATP from ADP in the presence of a proton gradient across the membrane. The alpha chain is a regulatory subunit. The protein is ATP synthase subunit alpha of Ralstonia nicotianae (strain ATCC BAA-1114 / GMI1000) (Ralstonia solanacearum).